Reading from the N-terminus, the 360-residue chain is Cell division protein DivIB (360 aa).

Residues 1–54 form a disordered region; it reads MTEKDSNVEESVLEVEQASQVELDSEQISPAEKESVLAEEKEFSTDVDIPEMTA. Topologically, residues 1–139 are cytoplasmic; it reads MTEKDSNVEE…VDIPSKVVWK (139 aa). A compositionally biased stretch (polar residues) spans 17 to 28; that stretch reads QASQVELDSEQI. Over residues 31 to 44 the composition is skewed to basic and acidic residues; it reads AEKESVLAEEKEFS. Residues 140-160 traverse the membrane as a helical segment; the sequence is AIPVLVTSLLLAALALYFISP. The Extracellular segment spans residues 161–360; the sequence is TSKKKQIEVV…MEVGIYRYAS (200 aa). Residues 162–233 form the POTRA domain; the sequence is SKKKQIEVVG…ATFTIHIKEY (72 aa).

It belongs to the FtsQ/DivIB family. DivIB subfamily.

Its subcellular location is the cell membrane. Cell division protein that may be involved in stabilizing or promoting the assembly of the division complex. This Streptococcus suis (strain GZ1) protein is Cell division protein DivIB.